Here is a 135-residue protein sequence, read N- to C-terminus: Prostate and breast cancer overexpressed gene 1 protein (135 aa).

As to expression, expressed in colon, prostate, small intestine, testis and spleen, with lower expression in thymus, ovary, and peripheral blood leukocytes. Up-regulated expression in prostate, breast, and bladder cancer, but not in lung and colon cancer.

It localises to the cytoplasm. Its subcellular location is the nucleus. This chain is Prostate and breast cancer overexpressed gene 1 protein (PBOV1), found in Homo sapiens (Human).